The primary structure comprises 295 residues: Cutinase 11 (295 aa).

Residues 1-17 form the signal peptide; that stretch reads MQTSALLLAAQALVASA. Cys25 and Cys102 are disulfide-bonded. Active-site residues include Ser113, Asp198, and His210. Cys184 and Cys202 are disulfide-bonded. The tract at residues 228-258 is disordered; it reads KLNSGGSPPTTPPTTPPTTPPTTPPTTPPPS. Positions 236 to 258 are enriched in pro residues; it reads PTTPPTTPPTTPPTTPPTTPPPS. A CBM1 domain is found at 260–295; it reads SCAALYGQCGGQGWNGATCCSQGTCRASNQWYSQCL.

The protein belongs to the cutinase family. Post-translationally, the 2 disulfide bonds play a critical role in holding the catalytic residues in juxta-position; reduction of the disulfide bridges results in the complete inactivation of the enzyme.

The protein localises to the secreted. It carries out the reaction cutin + H2O = cutin monomers.. Functionally, catalyzes the hydrolysis of complex carboxylic polyesters found in the cell wall of plants. May degrade cutin, a macromolecule that forms the structure of the plant cuticle. May also degrade suberin, a specialized macromolecule found in the cell wall of various plant tissues. Allows pathogenic fungi to penetrate through the cuticular barrier into the host plant during the initial stage of fungal infection. Involved in pathogenesis. This is Cutinase 11 from Verticillium dahliae (Verticillium wilt).